The chain runs to 796 residues: Serine/threonine-protein kinase ATG1 (796 aa).

The Protein kinase domain occupies 9-304 (YVVGAEIGRG…FQEFFNDPVI (296 aa)). ATP-binding positions include 15 to 23 (IGRGSFANV) and Lys-38. The active-site Proton acceptor is the Asp-155. The segment covering 360 to 370 (LEEEDEEEDQD) has biased composition (acidic residues). Disordered stretches follow at residues 360 to 382 (LEEE…IQHM), 389 to 408 (LLNK…RREL), and 450 to 480 (PYTR…KVPI). A compositionally biased stretch (polar residues) spans 389-403 (LLNKTTQKQTEVQSQ). The span at 453 to 470 (RRYSSSSRSSSTGSNQRR) shows a compositional bias: low complexity.

This sequence belongs to the protein kinase superfamily. Ser/Thr protein kinase family. APG1/unc-51/ULK1 subfamily. As to quaternary structure, homodimer. Forms a ternary complex with ATG13 and ATG17.

The protein localises to the cytoplasm. It is found in the preautophagosomal structure membrane. The enzyme catalyses L-seryl-[protein] + ATP = O-phospho-L-seryl-[protein] + ADP + H(+). It carries out the reaction L-threonyl-[protein] + ATP = O-phospho-L-threonyl-[protein] + ADP + H(+). Functionally, serine/threonine protein kinase involved in the cytoplasm to vacuole transport (Cvt) and found to be essential in autophagy, where it is required for the formation of autophagosomes. Involved in the clearance of protein aggregates which cannot be efficiently cleared by the proteasome. Required for selective autophagic degradation of the nucleus (nucleophagy) as well as for mitophagy which contributes to regulate mitochondrial quantity and quality by eliminating the mitochondria to a basal level to fulfill cellular energy requirements and preventing excess ROS production. Also involved in endoplasmic reticulum-specific autophagic process, in selective removal of ER-associated degradation (ERAD) substrates. Plays a key role in ATG9 and ATG23 cycling through the pre-autophagosomal structure and is necessary to promote ATG18 binding to ATG9 through phosphorylation of ATG9. Catalyzes phosphorylation of ATG4, decreasing the interaction between ATG4 and ATG8 and impairing deconjugation of PE-conjugated forms of ATG8. The chain is Serine/threonine-protein kinase ATG1 from Komagataella pastoris (Yeast).